A 236-amino-acid chain; its full sequence is LHFPL tetraspan subfamily member 3 protein (236 aa).

Transmembrane regions (helical) follow at residues 36–56 (IGVL…VCFI), 110–130 (FFIG…TLFF), 140–160 (ICAW…MIFP), and 191–211 (ILAI…FVLG).

The protein belongs to the LHFP family.

The protein localises to the membrane. In Homo sapiens (Human), this protein is LHFPL tetraspan subfamily member 3 protein.